We begin with the raw amino-acid sequence, 304 residues long: Coenzyme PQQ synthesis protein B (304 aa).

The protein belongs to the PqqB family.

Its pathway is cofactor biosynthesis; pyrroloquinoline quinone biosynthesis. Its function is as follows. May be involved in the transport of PQQ or its precursor to the periplasm. The protein is Coenzyme PQQ synthesis protein B of Pseudomonas paraeruginosa (strain DSM 24068 / PA7) (Pseudomonas aeruginosa (strain PA7)).